A 330-amino-acid chain; its full sequence is D-cysteine desulfhydrase (330 aa).

Lysine 52 is subject to N6-(pyridoxal phosphate)lysine.

It belongs to the ACC deaminase/D-cysteine desulfhydrase family. In terms of assembly, homodimer. Requires pyridoxal 5'-phosphate as cofactor.

The catalysed reaction is D-cysteine + H2O = hydrogen sulfide + pyruvate + NH4(+) + H(+). Its function is as follows. Catalyzes the alpha,beta-elimination reaction of D-cysteine and of several D-cysteine derivatives. It could be a defense mechanism against D-cysteine. This Serratia proteamaculans (strain 568) protein is D-cysteine desulfhydrase.